The chain runs to 680 residues: Probable inactive DNA (cytosine-5)-methyltransferase DRM3 (680 aa).

The interval 1-24 is disordered; sequence MVKVEDDVEGSGINASVGDLRDAA. The UBA 1 domain maps to 45–86; sequence SSSSHVRSQFIGMGFSPMLVDRVLQKHGDRDSDTILEALLSQ. The disordered stretch occupies residues 91–113; the sequence is KSGSESGSLGDLFDSDNEENSSH. In terms of domain architecture, UBA 2 spans 194–235; the sequence is SLFGVMDKTLHLLQMGFTEEEVSSVIDKAGPEATVLELADTI. Positions 336–663 constitute an SAM-dependent MTase DRM-type domain; sequence IRRNVRSDVA…QRVKHIMGRL (328 aa).

This sequence belongs to the class I-like SAM-binding methyltransferase superfamily. DRM-methyltransferase family.

It is found in the nucleus. Involved in de novo DNA methylation. Involved in RNA-directed DNA methylation (RdDM). The protein is Probable inactive DNA (cytosine-5)-methyltransferase DRM3 of Oryza sativa subsp. japonica (Rice).